The primary structure comprises 171 residues: Transcription factor E (171 aa).

Positions 5-91 (DNKAVRGYIQ…LWKLDLDNSV (87 aa)) constitute an HTH TFE/IIEalpha-type domain.

Belongs to the TFE family. As to quaternary structure, monomer. Interaction with RNA polymerase subunits RpoF and RpoE is necessary for Tfe stimulatory transcription activity. Able to interact with Tbp and RNA polymerase in the absence of DNA promoter. Interacts both with the preinitiation and elongation complexes.

Transcription factor that plays a role in the activation of archaeal genes transcribed by RNA polymerase. Facilitates transcription initiation by enhancing TATA-box recognition by TATA-box-binding protein (Tbp), and transcription factor B (Tfb) and RNA polymerase recruitment. Not absolutely required for transcription in vitro, but particularly important in cases where Tbp or Tfb function is not optimal. It dynamically alters the nucleic acid-binding properties of RNA polymerases by stabilizing the initiation complex and destabilizing elongation complexes. Seems to translocate with the RNA polymerase following initiation and acts by binding to the non template strand of the transcription bubble in elongation complexes. This is Transcription factor E from Methanocella arvoryzae (strain DSM 22066 / NBRC 105507 / MRE50).